We begin with the raw amino-acid sequence, 173 residues long: Small ribosomal subunit protein uS5 (173 aa).

Residues 17 to 80 (LREKMIAVNR…EEARRNMVKV (64 aa)) form the S5 DRBM domain.

This sequence belongs to the universal ribosomal protein uS5 family. As to quaternary structure, part of the 30S ribosomal subunit. Contacts proteins S4 and S8.

With S4 and S12 plays an important role in translational accuracy. In terms of biological role, located at the back of the 30S subunit body where it stabilizes the conformation of the head with respect to the body. The polypeptide is Small ribosomal subunit protein uS5 (Acidovorax sp. (strain JS42)).